A 307-amino-acid polypeptide reads, in one-letter code: ATP-dependent (S)-NAD(P)H-hydrate dehydratase (307 aa).

The region spanning 1-291 is the YjeF C-terminal domain; sequence MDHFIKLLPK…DEIPKLVRDV (291 aa). (6S)-NADPHX contacts are provided by residues Gly-96 and 150–156; that span reads NIVEFSR. ATP is bound by residues 194–198 and 214–223; these read KGEVD and SSLRRCGGQG. Residue Asp-224 participates in (6S)-NADPHX binding.

The protein belongs to the NnrD/CARKD family. Mg(2+) is required as a cofactor.

It carries out the reaction (6S)-NADHX + ATP = ADP + phosphate + NADH + H(+). It catalyses the reaction (6S)-NADPHX + ATP = ADP + phosphate + NADPH + H(+). Catalyzes the dehydration of the S-form of NAD(P)HX at the expense of ATP, which is converted to ADP. Together with NAD(P)HX epimerase, which catalyzes the epimerization of the S- and R-forms, the enzyme allows the repair of both epimers of NAD(P)HX, a damaged form of NAD(P)H that is a result of enzymatic or heat-dependent hydration. The chain is ATP-dependent (S)-NAD(P)H-hydrate dehydratase from Caenorhabditis elegans.